The chain runs to 276 residues: Eukaryotic translation initiation factor 3 subunit G-2 (276 aa).

Residues 196 to 274 form the RRM domain; that stretch reads SAVRISNLSE…LILCVEWSKP (79 aa).

The protein belongs to the eIF-3 subunit G family. In terms of assembly, component of the eukaryotic translation initiation factor 3 (eIF-3) complex. The eIF-3 complex interacts with pix.

Its subcellular location is the cytoplasm. Its function is as follows. RNA-binding component of the eukaryotic translation initiation factor 3 (eIF-3) complex, which is involved in protein synthesis of a specialized repertoire of mRNAs and, together with other initiation factors, stimulates binding of mRNA and methionyl-tRNAi to the 40S ribosome. The eIF-3 complex specifically targets and initiates translation of a subset of mRNAs involved in cell proliferation. This subunit can bind 18S rRNA. The protein is Eukaryotic translation initiation factor 3 subunit G-2 of Drosophila persimilis (Fruit fly).